A 276-amino-acid chain; its full sequence is Formamidopyrimidine-DNA glycosylase (276 aa).

The active-site Schiff-base intermediate with DNA is the Pro-2. The active-site Proton donor is the Glu-3. The active-site Proton donor; for beta-elimination activity is the Lys-58. The DNA site is built by His-92, Arg-111, and Lys-154. Residues 239-273 (QVYGHAGEECNNCGTILEKIKVNGRGTTFCPHCQV) form an FPG-type zinc finger. Arg-263 (proton donor; for delta-elimination activity) is an active-site residue.

This sequence belongs to the FPG family. Monomer. It depends on Zn(2+) as a cofactor.

It catalyses the reaction Hydrolysis of DNA containing ring-opened 7-methylguanine residues, releasing 2,6-diamino-4-hydroxy-5-(N-methyl)formamidopyrimidine.. It carries out the reaction 2'-deoxyribonucleotide-(2'-deoxyribose 5'-phosphate)-2'-deoxyribonucleotide-DNA = a 3'-end 2'-deoxyribonucleotide-(2,3-dehydro-2,3-deoxyribose 5'-phosphate)-DNA + a 5'-end 5'-phospho-2'-deoxyribonucleoside-DNA + H(+). Its function is as follows. Involved in base excision repair of DNA damaged by oxidation or by mutagenic agents. Acts as a DNA glycosylase that recognizes and removes damaged bases. Has a preference for oxidized purines, such as 7,8-dihydro-8-oxoguanine (8-oxoG). Has AP (apurinic/apyrimidinic) lyase activity and introduces nicks in the DNA strand. Cleaves the DNA backbone by beta-delta elimination to generate a single-strand break at the site of the removed base with both 3'- and 5'-phosphates. This Lactobacillus johnsonii (strain CNCM I-12250 / La1 / NCC 533) protein is Formamidopyrimidine-DNA glycosylase.